Consider the following 113-residue polypeptide: MNTVRVTFLLVFVLAVSLGQADKDENRMEMQEKTEQGKSYLDFAENLLLQKLEELEAKLLEEDSEESRNSRQKRCIGEGVPCDENDPRCCSGFVCLKPTLHGIWYKSYYCYKK.

The first 21 residues, Met1–Ala21, serve as a signal peptide directing secretion. A propeptide spanning residues Asp22–Arg74 is cleaved from the precursor. Positions Glu61–Asp83 are disordered. Disulfide bonds link Cys75/Cys90, Cys82/Cys95, and Cys89/Cys110.

This sequence belongs to the neurotoxin 14 (magi-1) family. 01 (HNTX-16) subfamily. As to expression, expressed by the venom gland.

Its subcellular location is the secreted. Its function is as follows. Probable ion channel inhibitor. This is U11-theraphotoxin-Hhn1k from Cyriopagopus hainanus (Chinese bird spider).